The following is an 84-amino-acid chain: Small ribosomal subunit protein uS17 (84 aa).

The protein belongs to the universal ribosomal protein uS17 family. In terms of assembly, part of the 30S ribosomal subunit.

One of the primary rRNA binding proteins, it binds specifically to the 5'-end of 16S ribosomal RNA. In Actinobacillus pleuropneumoniae serotype 5b (strain L20), this protein is Small ribosomal subunit protein uS17.